The following is a 188-amino-acid chain: MFQATSTGAQIMHAAFPRSWRRGHVLPLRSAKIFKPLACLELRGSTGIGGFHEIELKVRDYELDQFGVVNNAVYANYCQHGRHEFMDSIGINCNEVSRSGGALAIPELTIKFLAPLRSGCRFVVKTRISGISLVRIYFEQFIFKLPNQEPILEAKGTAVWLDNKYRPTRVPSHVRSYFGHFQCQHLVD.

Residues 1-47 (MFQATSTGAQIMHAAFPRSWRRGHVLPLRSAKIFKPLACLELRGSTG) constitute a chloroplast transit peptide. D64 is a catalytic residue.

Belongs to the 4-hydroxybenzoyl-CoA thioesterase family. In terms of tissue distribution, expressed in endodermal and peridermal cells in young and mature roots, in boundaries of stem lateral organs and developing seeds.

It is found in the plastid. Its subcellular location is the chloroplast. Functionally, acyl-ACP thioesterase involved in the production of fatty acids and beta-keto fatty acids. Can produce beta-keto fatty acids of medium chain (8:0 and 10:0) and small amounts of 8:0 fatty acid when expressed in a heterologous organism (E.coli). May play a role in suberin biosynthesis. The polypeptide is Acyl-acyl carrier protein thioesterase ATL2, chloroplastic (Arabidopsis thaliana (Mouse-ear cress)).